The chain runs to 275 residues: 2,3,4,5-tetrahydropyridine-2,6-dicarboxylate N-succinyltransferase (275 aa).

Arg-105 and Asp-142 together coordinate substrate.

The protein belongs to the transferase hexapeptide repeat family. In terms of assembly, homotrimer.

It localises to the cytoplasm. The catalysed reaction is (S)-2,3,4,5-tetrahydrodipicolinate + succinyl-CoA + H2O = (S)-2-succinylamino-6-oxoheptanedioate + CoA. It participates in amino-acid biosynthesis; L-lysine biosynthesis via DAP pathway; LL-2,6-diaminopimelate from (S)-tetrahydrodipicolinate (succinylase route): step 1/3. This Histophilus somni (strain 129Pt) (Haemophilus somnus) protein is 2,3,4,5-tetrahydropyridine-2,6-dicarboxylate N-succinyltransferase.